A 126-amino-acid chain; its full sequence is Aspartate 1-decarboxylase (126 aa).

The active-site Schiff-base intermediate with substrate; via pyruvic acid is serine 25. A Pyruvic acid (Ser) modification is found at serine 25. Threonine 57 contributes to the substrate binding site. Tyrosine 58 functions as the Proton donor in the catalytic mechanism. 73–75 (GAA) contacts substrate.

Belongs to the PanD family. As to quaternary structure, heterooctamer of four alpha and four beta subunits. Pyruvate serves as cofactor. Is synthesized initially as an inactive proenzyme, which is activated by self-cleavage at a specific serine bond to produce a beta-subunit with a hydroxyl group at its C-terminus and an alpha-subunit with a pyruvoyl group at its N-terminus.

It is found in the cytoplasm. It carries out the reaction L-aspartate + H(+) = beta-alanine + CO2. It participates in cofactor biosynthesis; (R)-pantothenate biosynthesis; beta-alanine from L-aspartate: step 1/1. In terms of biological role, catalyzes the pyruvoyl-dependent decarboxylation of aspartate to produce beta-alanine. The polypeptide is Aspartate 1-decarboxylase (Alcanivorax borkumensis (strain ATCC 700651 / DSM 11573 / NCIMB 13689 / SK2)).